The chain runs to 604 residues: Elongation factor 4 (604 aa).

The region spanning 10-191 (KNIRNFSIIA…KIITTIPAPS (182 aa)) is the tr-type G domain. Residues 22–27 (DHGKST) and 138–141 (NKID) each bind GTP.

Belongs to the TRAFAC class translation factor GTPase superfamily. Classic translation factor GTPase family. LepA subfamily.

It is found in the cell inner membrane. The catalysed reaction is GTP + H2O = GDP + phosphate + H(+). Required for accurate and efficient protein synthesis under certain stress conditions. May act as a fidelity factor of the translation reaction, by catalyzing a one-codon backward translocation of tRNAs on improperly translocated ribosomes. Back-translocation proceeds from a post-translocation (POST) complex to a pre-translocation (PRE) complex, thus giving elongation factor G a second chance to translocate the tRNAs correctly. Binds to ribosomes in a GTP-dependent manner. This Helicobacter pylori (strain P12) protein is Elongation factor 4.